Reading from the N-terminus, the 212-residue chain is DNA-directed RNA polymerase III subunit RPC8 (212 aa).

Ser-162 is subject to Phosphoserine. Basic and acidic residues predominate over residues 166–184; sequence RELEERAQLENEIEGKNEE. The disordered stretch occupies residues 166–194; sequence RELEERAQLENEIEGKNEETPQNEKPPAY.

It belongs to the eukaryotic RPB7/RPC8 RNA polymerase subunit family. In terms of assembly, component of the RNA polymerase III (Pol III) complex consisting of 17 subunits. RPC25/RPC8 and RPC17/RPC9 form a Pol III subcomplex.

It localises to the nucleus. DNA-dependent RNA polymerase catalyzes the transcription of DNA into RNA using the four ribonucleoside triphosphates as substrates. Specific peripheric component of RNA polymerase III which synthesizes small RNAs, such as 5S rRNA and tRNA. The RPC25/RPC8-RPC17/RPC9 subcomplex may bind Pol III transcripts emerging from the adjacent exit pore during elongation. The protein is DNA-directed RNA polymerase III subunit RPC8 (RPC25) of Saccharomyces cerevisiae (strain ATCC 204508 / S288c) (Baker's yeast).